A 322-amino-acid chain; its full sequence is Transcription initiation factor IIB (322 aa).

2 tandem repeats follow at residues Ser125–Leu213 and Asn224–Gln305.

It belongs to the TFIIB family.

Functionally, stabilizes TBP binding to an archaeal box-A promoter. Also responsible for recruiting RNA polymerase II to the pre-initiation complex (DNA-TBP-TFIIB). The protein is Transcription initiation factor IIB of Aeropyrum pernix (strain ATCC 700893 / DSM 11879 / JCM 9820 / NBRC 100138 / K1).